Consider the following 132-residue polypeptide: MASRMGMVAILSLFVCALVASTSVNANVWQTDEDAFYSTNKLGVNGNMEMAQQQGGFIGHRPRLASFNRASKQLDREKRPVPSGPDPIHHSIPSHAPQHPPSYGKAPYEDDKSIASPGLSNLIGPPPFLDRY.

The N-terminal stretch at 1 to 26 (MASRMGMVAILSLFVCALVASTSVNA) is a signal peptide. The disordered stretch occupies residues 68 to 132 (NRASKQLDRE…IGPPPFLDRY (65 aa)). Pro82 and Pro85 each carry hydroxyproline. An O-linked (Ara...) hydroxyproline glycan is attached at Pro85.

The protein belongs to the CLV3/ESR signal peptide family. Post-translationally, the O-glycosylation (arabinosylation) of the hydroxyproline Pro-85 enhances binding affinity of the ESR2Bp peptide for its receptor. Seed endosperm.

The protein localises to the secreted. Its subcellular location is the extracellular space. Its function is as follows. Extracellular signal peptide that regulates cell fate. The sequence is that of CLAVATA3/ESR (CLE)-related protein 2-B from Zea mays (Maize).